Here is a 343-residue protein sequence, read N- to C-terminus: UPF0283 membrane protein blr7254 (343 aa).

3 consecutive transmembrane segments (helical) span residues 64–84 (GALF…LGVV), 97–117 (LGFV…VVIG), and 214–234 (IVTA…VAAL).

It belongs to the UPF0283 family.

Its subcellular location is the cell inner membrane. The protein is UPF0283 membrane protein blr7254 of Bradyrhizobium diazoefficiens (strain JCM 10833 / BCRC 13528 / IAM 13628 / NBRC 14792 / USDA 110).